Consider the following 863-residue polypeptide: DNA ligase (863 aa).

NAD(+)-binding positions include aspartate 76–aspartate 80, serine 125–leucine 126, and glutamate 159. The active-site N6-AMP-lysine intermediate is the lysine 161. NAD(+) contacts are provided by arginine 182 and glutamate 221. Positions glutamate 237–arginine 256 are disordered. The span at arginine 241–glycine 253 shows a compositional bias: low complexity. Residues lysine 346 and lysine 370 each contribute to the NAD(+) site. 4 residues coordinate Zn(2+): cysteine 467, cysteine 470, cysteine 486, and cysteine 492. Positions glycine 781–glutamine 863 constitute a BRCT domain.

Belongs to the NAD-dependent DNA ligase family. LigA subfamily. Requires Mg(2+) as cofactor. Mn(2+) is required as a cofactor.

It catalyses the reaction NAD(+) + (deoxyribonucleotide)n-3'-hydroxyl + 5'-phospho-(deoxyribonucleotide)m = (deoxyribonucleotide)n+m + AMP + beta-nicotinamide D-nucleotide.. DNA ligase that catalyzes the formation of phosphodiester linkages between 5'-phosphoryl and 3'-hydroxyl groups in double-stranded DNA using NAD as a coenzyme and as the energy source for the reaction. It is essential for DNA replication and repair of damaged DNA. The sequence is that of DNA ligase from Bifidobacterium animalis subsp. lactis (strain AD011).